Reading from the N-terminus, the 289-residue chain is Glycine-rich RNA-binding protein 5, mitochondrial (289 aa).

Residues 1–31 (MAFLSKVGRLFSQTSSHVTASSSMLQSIRCM) constitute a mitochondrion transit peptide. In terms of domain architecture, RRM spans 34–111 (SKIFVGGISY…RRIRVNYATE (78 aa)). A disordered region spans residues 219–289 (QGSSTNAGFD…TDDGDVAKRA (71 aa)). A compositionally biased stretch (polar residues) spans 257 to 272 (GSDNQFGDAENGNTEN).

The protein belongs to the GR-RBP family. Homodimer. Interacts with MORF8/RIP1 AND RBG3/ORRM3. Binds to RBG2/ORRM5.

The protein localises to the mitochondrion. Possibly has a role in RNA transcription or processing during stress. Binds RNAs and DNAs sequence with a preference to single-stranded nucleic acids. Displays strong affinity to poly(U) sequence. Involved in C-to-U editing of mitochondrial RNA. Functions as a major mitochondrial editing factor. Controls 44 percent of the mitochondrial editing sites. This is Glycine-rich RNA-binding protein 5, mitochondrial from Arabidopsis thaliana (Mouse-ear cress).